The following is a 247-amino-acid chain: STING ER exit protein (247 aa).

Residue serine 127 is modified to Phosphoserine. The stretch at 195–216 (EAREIADSYANNARIIEKQLQR) forms a coiled coil. The segment at 215–247 (QRKGGKLSDVGIKTKTEDAPPPQKKQRGTLLER) is disordered.

It belongs to the STEEP1 family.

Functionally, molecular adapter that stimulates membrane curvature formation and subsequent endoplasmic reticulum exit site (ERES) establishment by recruiting PI3K complex I, leading to COPII vesicle-mediated transport. In Drosophila melanogaster (Fruit fly), this protein is STING ER exit protein.